Here is a 393-residue protein sequence, read N- to C-terminus: RNA pseudouridine synthase 7 (393 aa).

Residues 49-118 (KTIVDLFTDE…GDITILQNEA (70 aa)) form the S4 RNA-binding domain. Asp-162 is an active-site residue.

This sequence belongs to the pseudouridine synthase RluA family.

The enzyme catalyses a uridine in RNA = a pseudouridine in RNA. This Oryza sativa subsp. japonica (Rice) protein is RNA pseudouridine synthase 7.